The following is a 2007-amino-acid chain: MAAEGASDPAGLSEGSGRDGAVDGCRTVYLFDRRGKDSELGDRALQVSEHADYAGFRASVCQTIGISSEEKFVITTTSRKEITCNNFDHTVKDGVTLYLLQSVDQSLLTATKERIDFLPHYDTLVKSGMYEYYASEGQNPLPFALAELIDNSLSATSRNNGVRRIQIKLLFDETQGKPAVAVVDNGRGMTSKQLNNWAVYRLSKFTRQGDFESDHSGYVRPLPVPRSLNSDISYFGVGGKQAVFFVGQSARMISKPIDSKDVHELVLSKEDFEKKEKNKEAIYSGYIRNRKPADSAHITNDDERFLHNLIEEEKEKDSFTAVVITGVQPEHIQYLKNYLHLWTRQLTHIYHYYIHGPKGNEISTAKAIGPFNNIDIEISLFEKGKTPKIINLREIQDDMQTLYINTASDSFEFKAHVEGDGVVEGVIRYHPFLYDRETFPDDPCFPSKLKDEDDDDDCFISEKAARGKRPIFECFWNGRLIPYTSVGDFDWCAPPKKRGLVPIECFNRISGALFTNDKFQVSTNKLTFMDLELKLKDKNTLFTRILNGQEQRMKIDREFALWLKDCHEKHDKQIKFTLFKGIITRPDLPTKKQGPWATFSAIEWDGKIYKAGQLVKTIKTLPLCYGSIVRFFLHGDHDGEVYATGGEVQIAMEPQALYDEIKTVPIAKLDRTVAEKTIRKYVEDEMARLPDRLSVTWPEGDELLPNEVRPAGTPIGALRIEILNKKGEAMQKLPGTSHGGSKKLLVELKVILHTSSGNKEIISHISQHGGKWPYWFKKMENIQKLGNYTLKLQVVLNESNADTYAGRSLPSKVIKFSVKEGKPEKFSFGLLDSPFRVGVPFNIPLELQDEFGHTTQLLSDIEPVLEASGLSLHYEGITKGPNCVIQGVVAKGPVNSCQGKNFNLKVILPGLKEDSQILKIRLLPGPPHQLKVKPDSEVLVIENGTAFPFQVEVVDESDNITAQPKLIVHCKFLGAPNLPVYTVDCSSSGTSILTGSPIQVQNIKKDQKTLTARIEIPSCKDVSPVEKTIKLLPSSHAACLQIFSVEEQKAIQIKHQDEVTWVAGDVIRNLIFQMYDEGEREINITPSLAEKIKVNWTPEVNKEHLVQGLLPDVQVPTSVKDVRYCHVSFQDDHVCLESAFTVRPLPDDPKHLKCELKGGKTVQMGQELQGEIVVIIADQYGNQISSFSPDSLSTLSITGDGLDSSNLKITLEANSQSVSVQGIRFTPGPPGPKDLCFTWREFSDFLRVQLVSGPPTKLLLMDWPELKESIPVINGRQLENPLIVQLCDQWDNPALVPNVKICLIKASSLRLLPSNQQHKTDDKGRANLGVFTVCAPRGEHTVQVKGVYNKSTIEGPTIKLTILPDPEKPIRLNVKYDQDASFIAGDIFTDFMVSVISESGSVIKNINPTRISMKMWKLSSGMSRPPANAETFSCNKIKGNDKEDGCFYFREKTIPNKVGAYCIQFDFMIDKTNILSSQQVIVDVLPNQPMKLVPDSQPATPAVSNVRSIASRTLVKDLRLSITDNYGNHTGMDLVGTVVATIKGFNEEDTDTPLFIGKVRTLEFPFVKGSAEITTLVLAENSPGRDSTEYFIIFEPRLSTVSGTLESYSLPFMFYNDVKKQQQMAALTKEKDELSKSITMYRSLFDANKQLVDEMKCQAEEAKLKETQLRNELKAYNIDIPATQQTTHIEALLEKKITEQNELKKRPRRLCTLPNYTKRSGDILGKIAHLAQIEDDRAAMVISWHLASDMDCVVTLTTDAARAIYDETQGRQQVLPLDSIYRKTLPDWKRPLPHFRNGKLHFKPFGNPVFARDLLTFPDNIEHCETVFGMLLGDTIILDNLDAANHYRKEVVKITHCPTLLTRDGDRIRSNGKFGGLQNKAPPMDKLRGMVFGAPVPKQCVVLGKQIDLIQQYRTALYRLSSVNEDLDNQLQYLHTPDMKKKKQELDEQEKSLKRIEQKLGMTPVRRCNESLCHSPKIEVTECPIPTKRMRRESTRQNRRPKGDVPN.

Ala2 carries the N-acetylalanine modification. Positions Thr111–Glu702 are ATPase activity domain. Ser833 bears the Phosphoserine mark. Lys1350 carries the N6-acetyllysine modification. Lys1375 participates in a covalent cross-link: Glycyl lysine isopeptide (Lys-Gly) (interchain with G-Cter in SUMO2). The residue at position 1500 (Thr1500) is a Phosphothreonine. The SMC hinge domain maps to Gly1721–Arg1848. At Lys1803 the chain carries N6-succinyllysine. A Phosphoserine modification is found at Ser1975. A disordered region spans residues Pro1984–Asn2007.

The protein belongs to the SMC family. Highly divergent. Homodimer; homodimerizes via its SMC hinge domain. Interacts with LRIF1. In terms of processing, sumoylated with SUMO1. During embryogenesis, specifically expressed in immature olfactory sensory neurons.

It is found in the chromosome. The enzyme catalyses ATP + H2O = ADP + phosphate + H(+). Its function is as follows. Non-canonical member of the structural maintenance of chromosomes (SMC) protein family that plays a key role in epigenetic silencing by regulating chromatin architecture. Promotes heterochromatin formation in both autosomes and chromosome X, probably by mediating the merge of chromatin compartments. Plays a key role in chromosome X inactivation in females by promoting the spreading of heterochromatin. Recruited to inactivated chromosome X by Xist RNA and acts by mediating the merge of chromatin compartments: promotes random chromatin interactions that span the boundaries of existing structures, leading to create a compartment-less architecture typical of inactivated chromosome X. Required to facilitate Xist RNA spreading. Also required for silencing of a subset of clustered autosomal loci in somatic cells, such as the DUX4 locus. Has ATPase activity; may participate in structural manipulation of chromatin in an ATP-dependent manner as part of its role in gene expression regulation. Also plays a role in DNA repair: localizes to sites of DNA double-strand breaks in response to DNA damage to promote the repair of DNA double-strand breaks. Acts by promoting non-homologous end joining (NHEJ) and inhibiting homologous recombination (HR) repair. Required during preimplantation development, probably acts by regulating chromatin architecture. The chain is Structural maintenance of chromosomes flexible hinge domain-containing protein 1 from Mus musculus (Mouse).